The following is a 95-amino-acid chain: Acylphosphatase (95 aa).

Residues 9-95 enclose the Acylphosphatase-like domain; the sequence is RLTAWVHGRV…KGGLTGFVER (87 aa). Residues arginine 24 and asparagine 42 contribute to the active site.

This sequence belongs to the acylphosphatase family.

It catalyses the reaction an acyl phosphate + H2O = a carboxylate + phosphate + H(+). This is Acylphosphatase (acyP) from Saccharopolyspora erythraea (strain ATCC 11635 / DSM 40517 / JCM 4748 / NBRC 13426 / NCIMB 8594 / NRRL 2338).